The chain runs to 478 residues: Ubiquitin carboxyl-terminal hydrolase calypso (478 aa).

Residues 11–239 (GWLELESDPG…IRFNLMAVVP (229 aa)) enclose the UCH catalytic domain. The active-site Nucleophile is Cys-97. His-176 acts as the Proton donor in catalysis. The 29-residue stretch at 400–428 (NYDEFICTFLSMLAHQGELGDLVSQHLIT) folds into the ULD domain. A positively charged C-terminal tail required for binding nucleosomes region spans residues 430-478 (RKPNMGSVQNSGSRGVVRNYNKKTTTNGSSPKTPSSKRRRGRTKYRKRK). A compositionally biased stretch (polar residues) spans 432-442 (PNMGSVQNSGS). The interval 432-478 (PNMGSVQNSGSRGVVRNYNKKTTTNGSSPKTPSSKRRRGRTKYRKRK) is disordered. Basic residues predominate over residues 464–478 (SSKRRRGRTKYRKRK).

The protein belongs to the peptidase C12 family. BAP1 subfamily. Catalytic component of the polycomb repressive deubiquitinase (PR-DUB) complex, at least composed of caly/calypso, Asx and sba (MBD5/6 homolog). The PR-DUB complex associates with nucleosomes to mediate deubiquitination of histone H2AK118ub1 substrates; the association requires the positively charged C-terminal tail of caly, probably due to direct binding of DNA. Interacts (via ULD domain) with Asx (via DEUBAD domain); the interaction produces a stable heterodimer with a composite binding site for ubiquitin. Homodimerizes (via coiled-coil hinge-region between the UCH and ULD domains) to mediate assembly of 2 copies of the caly-Asx heterodimer into a bisymmetric tetramer; dimerization enhances PR-DUB association with nucleosomes.

The protein resides in the nucleus. The enzyme catalyses Thiol-dependent hydrolysis of ester, thioester, amide, peptide and isopeptide bonds formed by the C-terminal Gly of ubiquitin (a 76-residue protein attached to proteins as an intracellular targeting signal).. In terms of biological role, catalytic component of the polycomb repressive deubiquitinase (PR-DUB) complex, a complex that specifically mediates deubiquitination of histone H2A monoubiquitinated at 'Lys-119' (H2AK118ub1). Mediates bisymmetric organization of the PR-DUB complex and is involved in association with nucleosomes to mediate deubiquitination. Does not deubiquitinate monoubiquitinated histone H2B. Required to maintain the transcriptionally repressive state of homeotic genes throughout development. The PR-DUB complex has weak or no activity toward 'Lys-48'- and 'Lys-63'-linked polyubiquitin chains. Polycomb group (PcG) protein. The chain is Ubiquitin carboxyl-terminal hydrolase calypso from Aedes aegypti (Yellowfever mosquito).